Here is a 427-residue protein sequence, read N- to C-terminus: Adenylosuccinate synthetase (427 aa).

Residues 12–18 (GDEGKGK) and 40–42 (GHT) each bind GTP. Residue aspartate 13 is the Proton acceptor of the active site. The Mg(2+) site is built by aspartate 13 and glycine 40. IMP is bound by residues 13–16 (DEGK), 38–41 (NAGH), threonine 128, arginine 142, glutamine 223, threonine 238, and arginine 302. Histidine 41 acts as the Proton donor in catalysis. Residue 298-304 (TTTGRPR) coordinates substrate. GTP contacts are provided by residues arginine 304, 330–332 (SID), and 412–414 (SVG).

The protein belongs to the adenylosuccinate synthetase family. In terms of assembly, homodimer. Mg(2+) serves as cofactor.

The protein resides in the cytoplasm. The enzyme catalyses IMP + L-aspartate + GTP = N(6)-(1,2-dicarboxyethyl)-AMP + GDP + phosphate + 2 H(+). It functions in the pathway purine metabolism; AMP biosynthesis via de novo pathway; AMP from IMP: step 1/2. In terms of biological role, plays an important role in the de novo pathway of purine nucleotide biosynthesis. Catalyzes the first committed step in the biosynthesis of AMP from IMP. This Staphylococcus saprophyticus subsp. saprophyticus (strain ATCC 15305 / DSM 20229 / NCIMB 8711 / NCTC 7292 / S-41) protein is Adenylosuccinate synthetase.